The sequence spans 160 residues: SsrA-binding protein (160 aa).

Belongs to the SmpB family.

The protein resides in the cytoplasm. Required for rescue of stalled ribosomes mediated by trans-translation. Binds to transfer-messenger RNA (tmRNA), required for stable association of tmRNA with ribosomes. tmRNA and SmpB together mimic tRNA shape, replacing the anticodon stem-loop with SmpB. tmRNA is encoded by the ssrA gene; the 2 termini fold to resemble tRNA(Ala) and it encodes a 'tag peptide', a short internal open reading frame. During trans-translation Ala-aminoacylated tmRNA acts like a tRNA, entering the A-site of stalled ribosomes, displacing the stalled mRNA. The ribosome then switches to translate the ORF on the tmRNA; the nascent peptide is terminated with the 'tag peptide' encoded by the tmRNA and targeted for degradation. The ribosome is freed to recommence translation, which seems to be the essential function of trans-translation. The sequence is that of SsrA-binding protein from Enterobacter sp. (strain 638).